The sequence spans 233 residues: Ion-translocating oxidoreductase complex subunit E (233 aa).

Helical transmembrane passes span 18-38 (ALVQ…ATNA), 39-59 (LGLG…VSAL), 69-89 (IPIY…LINA), 92-112 (FGLY…CIVI), 128-148 (ALDG…LGAL), and 182-202 (PFLL…LLAG).

Belongs to the NqrDE/RnfAE family. In terms of assembly, the complex is composed of six subunits: RnfA, RnfB, RnfC, RnfD, RnfE and RnfG.

It localises to the cell inner membrane. Functionally, part of a membrane-bound complex that couples electron transfer with translocation of ions across the membrane. The polypeptide is Ion-translocating oxidoreductase complex subunit E (Yersinia pseudotuberculosis serotype IB (strain PB1/+)).